The following is a 347-amino-acid chain: tRNA N6-adenosine threonylcarbamoyltransferase (347 aa).

The Fe cation site is built by His-117 and His-121. Substrate-binding positions include 140 to 144, Asp-173, Gly-186, and Asn-280; that span reads LVSGG. Residue Asp-308 coordinates Fe cation.

This sequence belongs to the KAE1 / TsaD family. Fe(2+) is required as a cofactor.

Its subcellular location is the cytoplasm. The catalysed reaction is L-threonylcarbamoyladenylate + adenosine(37) in tRNA = N(6)-L-threonylcarbamoyladenosine(37) in tRNA + AMP + H(+). Functionally, required for the formation of a threonylcarbamoyl group on adenosine at position 37 (t(6)A37) in tRNAs that read codons beginning with adenine. Is involved in the transfer of the threonylcarbamoyl moiety of threonylcarbamoyl-AMP (TC-AMP) to the N6 group of A37, together with TsaE and TsaB. TsaD likely plays a direct catalytic role in this reaction. The polypeptide is tRNA N6-adenosine threonylcarbamoyltransferase (Psychrobacter sp. (strain PRwf-1)).